The sequence spans 426 residues: 3-phosphoshikimate 1-carboxyvinyltransferase (426 aa).

3-phosphoshikimate-binding residues include Lys-22, Ser-23, and Arg-27. Residue Lys-22 coordinates phosphoenolpyruvate. 2 residues coordinate phosphoenolpyruvate: Gly-96 and Arg-124. Positions 170, 171, 172, 198, 314, 337, and 341 each coordinate 3-phosphoshikimate. Phosphoenolpyruvate is bound at residue Gln-172. Asp-314 acts as the Proton acceptor in catalysis. Positions 345, 387, and 412 each coordinate phosphoenolpyruvate.

The protein belongs to the EPSP synthase family. In terms of assembly, monomer.

It is found in the cytoplasm. The catalysed reaction is 3-phosphoshikimate + phosphoenolpyruvate = 5-O-(1-carboxyvinyl)-3-phosphoshikimate + phosphate. The protein operates within metabolic intermediate biosynthesis; chorismate biosynthesis; chorismate from D-erythrose 4-phosphate and phosphoenolpyruvate: step 6/7. Its function is as follows. Catalyzes the transfer of the enolpyruvyl moiety of phosphoenolpyruvate (PEP) to the 5-hydroxyl of shikimate-3-phosphate (S3P) to produce enolpyruvyl shikimate-3-phosphate and inorganic phosphate. The chain is 3-phosphoshikimate 1-carboxyvinyltransferase from Shewanella loihica (strain ATCC BAA-1088 / PV-4).